The primary structure comprises 664 residues: PAN2-PAN3 deadenylation complex subunit PAN3 (664 aa).

Disordered regions lie at residues Met1–Asn27 and Asp54–Met134. Residues Asn27 to His56 form a C3H1-type zinc finger. Positions Asp74–Thr96 are enriched in polar residues. The span at Pro115 to Pro131 shows a compositional bias: low complexity. The tract at residues Gln265 to Ser525 is pseudokinase domain. Residues Arg317, Asp366–Thr373, and Ser425–Lys426 each bind ATP. Positions Ser526–Phe564 form a coiled coil. The segment at Val565–His664 is knob domain.

This sequence belongs to the protein kinase superfamily. PAN3 family. Homodimer. Forms a heterotrimer with a catalytic subunit pan2 to form the poly(A)-nuclease (PAN) deadenylation complex. Interacts (via PAM-2 motif) with poly(A)-binding protein pab1 (via PABC domain), conferring substrate specificity of the enzyme complex.

Its subcellular location is the cytoplasm. Functionally, regulatory subunit of the poly(A)-nuclease (PAN) deadenylation complex, one of two cytoplasmic mRNA deadenylases involved in mRNA turnover. PAN specifically shortens poly(A) tails of RNA and the activity is stimulated by poly(A)-binding protein pab1. PAN deadenylation is followed by rapid degradation of the shortened mRNA tails by the CCR4-NOT complex. Deadenylated mRNAs are then degraded by two alternative mechanisms, namely exosome-mediated 3'-5' exonucleolytic degradation, or deadenylation-dependent mRNA decaping and subsequent 5'-3' exonucleolytic degradation by xrn1. May also be involved in post-transcriptional maturation of mRNA poly(A) tails. pan3 acts as a positive regulator for PAN activity, recruiting the catalytic subunit pan2 to mRNA via its interaction with RNA and with pab1. The protein is PAN2-PAN3 deadenylation complex subunit PAN3 of Aspergillus niger (strain ATCC MYA-4892 / CBS 513.88 / FGSC A1513).